Reading from the N-terminus, the 142-residue chain is Putative pre-16S rRNA nuclease (142 aa).

Belongs to the YqgF nuclease family.

It localises to the cytoplasm. Functionally, could be a nuclease involved in processing of the 5'-end of pre-16S rRNA. The chain is Putative pre-16S rRNA nuclease from Lactobacillus acidophilus (strain ATCC 700396 / NCK56 / N2 / NCFM).